The following is a 530-amino-acid chain: Glutamate--cysteine ligase (530 aa).

It belongs to the glutamate--cysteine ligase type 1 family. Type 1 subfamily.

It carries out the reaction L-cysteine + L-glutamate + ATP = gamma-L-glutamyl-L-cysteine + ADP + phosphate + H(+). It functions in the pathway sulfur metabolism; glutathione biosynthesis; glutathione from L-cysteine and L-glutamate: step 1/2. This chain is Glutamate--cysteine ligase, found in Saccharophagus degradans (strain 2-40 / ATCC 43961 / DSM 17024).